The primary structure comprises 270 residues: BPI fold-containing family A member 5 (270 aa).

A signal peptide spans 1-19 (MFLAGSFIVLCGLLAQSTA). A disulfide bridge links C196 with C238.

It belongs to the BPI/LBP/Plunc superfamily. Plunc family. In terms of tissue distribution, expressed in interpapillar epithelium of the anterior part of the tongue.

It is found in the secreted. In terms of biological role, may play a role in innate immunity in the oral cavity. The polypeptide is BPI fold-containing family A member 5 (Bpifa5) (Mus musculus (Mouse)).